Consider the following 179-residue polypeptide: Large ribosomal subunit protein uL5 (179 aa).

The protein belongs to the universal ribosomal protein uL5 family. Part of the 50S ribosomal subunit; part of the 5S rRNA/L5/L18/L25 subcomplex. Contacts the 5S rRNA and the P site tRNA. Forms a bridge to the 30S subunit in the 70S ribosome.

In terms of biological role, this is one of the proteins that bind and probably mediate the attachment of the 5S RNA into the large ribosomal subunit, where it forms part of the central protuberance. In the 70S ribosome it contacts protein S13 of the 30S subunit (bridge B1b), connecting the 2 subunits; this bridge is implicated in subunit movement. Contacts the P site tRNA; the 5S rRNA and some of its associated proteins might help stabilize positioning of ribosome-bound tRNAs. The chain is Large ribosomal subunit protein uL5 from Rickettsia rickettsii (strain Iowa).